The sequence spans 946 residues: DNA primase (946 aa).

A disordered region spans residues 596–626 (RDTEEDEDGKEDKNNVPGNGVFQKTTSSVDT). Over residues 617-626 (FQKTTSSVDT) the composition is skewed to polar residues. The CHC2-type zinc-finger motif lies at 881 to 920 (CLNYTHRNPQETVQVFIDLRTEHSYALWASLWSRCFTKKC).

Belongs to the herpesviridae DNA primase family. Associates with the helicase and the primase-associated factor to form the helicase-primase factor.

It localises to the host nucleus. Essential component of the helicase/primase complex. Unwinds the DNA at the replication forks and generates single-stranded DNA for both leading and lagging strand synthesis. The primase initiates primer synthesis and thereby produces large amount of short RNA primers on the lagging strand that the polymerase elongates using dNTPs. The polypeptide is DNA primase (UL70) (Human cytomegalovirus (strain Merlin) (HHV-5)).